A 368-amino-acid polypeptide reads, in one-letter code: 1-deoxy-D-xylulose 5-phosphate reductoisomerase (368 aa).

Residues T7, G8, S9, I10, G31, K32, N33, and N113 each coordinate NADPH. Residue K114 coordinates 1-deoxy-D-xylulose 5-phosphate. E115 is a binding site for NADPH. D133 serves as a coordination point for Mn(2+). Residues S134, E135, S158, and H181 each contribute to the 1-deoxy-D-xylulose 5-phosphate site. E135 provides a ligand contact to Mn(2+). G187 contributes to the NADPH binding site. Residues S194, N199, K200, and E203 each coordinate 1-deoxy-D-xylulose 5-phosphate. Residue E203 participates in Mn(2+) binding.

It belongs to the DXR family. Mg(2+) is required as a cofactor. Requires Mn(2+) as cofactor.

It catalyses the reaction 2-C-methyl-D-erythritol 4-phosphate + NADP(+) = 1-deoxy-D-xylulose 5-phosphate + NADPH + H(+). It participates in isoprenoid biosynthesis; isopentenyl diphosphate biosynthesis via DXP pathway; isopentenyl diphosphate from 1-deoxy-D-xylulose 5-phosphate: step 1/6. Catalyzes the NADPH-dependent rearrangement and reduction of 1-deoxy-D-xylulose-5-phosphate (DXP) to 2-C-methyl-D-erythritol 4-phosphate (MEP). The sequence is that of 1-deoxy-D-xylulose 5-phosphate reductoisomerase from Helicobacter pylori (strain HPAG1).